The chain runs to 88 residues: Small ribosomal subunit protein bS20 (88 aa).

A disordered region spans residues 1-28 (MANTSSAKKATRKIARRTAVNKSRRTQM).

In terms of biological role, binds directly to 16S ribosomal RNA. The chain is Small ribosomal subunit protein bS20 from Rhodopseudomonas palustris (strain ATCC BAA-98 / CGA009).